The following is a 357-amino-acid chain: F-box only protein 25 (357 aa).

An interaction with beta-actin region spans residues 1–83 (MPFLGQDWRS…DTAAHSFYRE (83 aa)). Residues 225–273 (LTLSDLPLHMLNNILYRFSDGWDIVTLGQVTPTLYMLSEDRRLWKRLCQ) enclose the F-box domain.

In terms of assembly, part of a SCF (SKP1-cullin-F-box) protein ligase complex consisting of FBXO25, SKP1, CUL1 and RBX1. Interacts directly with SKP1 and CUL1. Interacts (via C-terminus) with beta-actin (via N-terminus). Expressed in all tissues tested, except striated muscle (at protein level). Expressed predominantly in the cerebral cortex, the hippocampus and the Purkinje cell layer of the brain. Intestine and kidney show also significant levels.

The protein resides in the nucleus. It participates in protein modification; protein ubiquitination. Substrate-recognition component of the SCF (SKP1-CUL1-F-box protein)-type E3 ubiquitin ligase complex. May play a role in accumulation of expanded polyglutamine (polyQ) protein huntingtin (HTT). The chain is F-box only protein 25 (Fbxo25) from Mus musculus (Mouse).